Consider the following 245-residue polypeptide: 1-(5-phosphoribosyl)-5-[(5-phosphoribosylamino)methylideneamino] imidazole-4-carboxamide isomerase (245 aa).

The active-site Proton acceptor is aspartate 7. Aspartate 129 serves as the catalytic Proton donor.

This sequence belongs to the HisA/HisF family.

It localises to the cytoplasm. The catalysed reaction is 1-(5-phospho-beta-D-ribosyl)-5-[(5-phospho-beta-D-ribosylamino)methylideneamino]imidazole-4-carboxamide = 5-[(5-phospho-1-deoxy-D-ribulos-1-ylimino)methylamino]-1-(5-phospho-beta-D-ribosyl)imidazole-4-carboxamide. Its pathway is amino-acid biosynthesis; L-histidine biosynthesis; L-histidine from 5-phospho-alpha-D-ribose 1-diphosphate: step 4/9. The polypeptide is 1-(5-phosphoribosyl)-5-[(5-phosphoribosylamino)methylideneamino] imidazole-4-carboxamide isomerase (Escherichia coli O9:H4 (strain HS)).